Consider the following 545-residue polypeptide: Serine/threonine-protein kinase PAK 1 (545 aa).

The disordered stretch occupies residues 1 to 75 (MSNNGVDIQD…KKREKERPEI (75 aa)). Position 2 is an N-acetylserine (S2). The residue at position 21 (S21) is a Phosphoserine; by PKB and autocatalysis. A Phosphoserine; by autocatalysis modification is found at S57. Residues 70–140 (KERPEISLPS…YNSKKTSNSK (71 aa)) are autoregulatory region. The region spanning 75–88 (ISLPSDFEHTIHVG) is the CRIB domain. Positions 75 to 105 (ISLPSDFEHTIHVGFDAVTGEFTGMPEQWAR) are GTPase-binding. T84 bears the Phosphothreonine; by OXSR1 mark. At S115 the chain carries Phosphoserine. Residues Y131 and Y142 each carry the phosphotyrosine modification. 2 positions are modified to phosphoserine; by autocatalysis: S144 and S149. Residues 150–198 (AEDYNSSNTLNVKTVSETPAVPPVSEDDEDDDDDATPPPVIAPRPEHTK) are disordered. Polar residues predominate over residues 152–166 (DYNSSNTLNVKTVSE). Y153 is modified (phosphotyrosine; by JAK2). The residue at position 174 (S174) is a Phosphoserine. Over residues 174-184 (SEDDEDDDDDA) the composition is skewed to acidic residues. T185 is modified (phosphothreonine). At S199 the chain carries Phosphoserine; by autocatalysis. Position 201 is a phosphotyrosine; by JAK2 (Y201). The residue at position 204 (S204) is a Phosphoserine; by autocatalysis. The interval 210-250 (PVTPTRDVATSPISPTENNTTPPDALTRNTEKQKKKPKMSD) is disordered. A phosphothreonine mark is found at T212 and T219. S220 and S223 each carry phosphoserine. The segment covering 220–231 (SPISPTENNTTP) has biased composition (polar residues). Residues T225, T229, and T230 each carry the phosphothreonine modification. The Protein kinase domain maps to 270 to 521 (YTPFEKIGQG…AKELLQHQFL (252 aa)). 276-284 (IGQGASGTV) is an ATP binding site. Y285 carries the post-translational modification Phosphotyrosine; by JAK2. K299 provides a ligand contact to ATP. D389 (proton acceptor) is an active-site residue. Residue T423 is modified to Phosphothreonine; by autocatalysis, BRSK2 and PDPK1.

This sequence belongs to the protein kinase superfamily. STE Ser/Thr protein kinase family. STE20 subfamily. Homodimer in its autoinhibited state. Active as monomer. Interacts with GIT1. Component of cytoplasmic complexes, which also contains PXN, ARHGEF7 and GIT1. Interacts with NISCH. Interacts with DVL1; mediates the formation of a DVL1, MUSK and PAK1 ternary complex involved in AChR clustering. Binds to the caspase-cleaved p110 isoform of CDC2L1 and CDC2L2, p110C, but not the full-length proteins. Interacts with ARHGEF7. Interacts tightly with GTP-bound but not GDP-bound CDC42/P21 and RAC1. Interacts with SCRIB. Interacts with PDPK1. Interacts (via kinase domain) with RAF1. Interacts with NCK1 and NCK2. Interacts with TBCB. Interacts with BRSK2. Interacts with SNAI1. Interacts with CIB1 (via N-terminal region); the interaction is direct, promotes PAK1 activity and occurs in a calcium-dependent manner. Interacts with INPP5K. Interacts with gamma-tubulin. Interacts with RHOU; the interaction promotes PAK1 activation. It depends on Mg(2+) as a cofactor. In terms of processing, autophosphorylated in trans, meaning that in a dimer, one kinase molecule phosphorylates the other one. Activated by autophosphorylation at Thr-423 in response to a conformation change, triggered by interaction with GTP-bound CDC42 or RAC1. Activated by phosphorylation at Thr-423 by BRSK2 and by PDPK1. Phosphorylated by JAK2 in response to PRL; this increases PAK1 kinase activity. Phosphorylated at Ser-21 by PKB/AKT; this reduces interaction with NCK1 and association with focal adhesion sites. Upon DNA damage, phosphorylated at Thr-212 and translocates to the nucleoplasm. Phosphorylated at tyrosine residues, which can be enhanced by NTN1.

The protein localises to the cytoplasm. It is found in the cell junction. The protein resides in the focal adhesion. It localises to the cell projection. Its subcellular location is the lamellipodium. The protein localises to the cell membrane. It is found in the ruffle membrane. The protein resides in the invadopodium. It localises to the nucleus. Its subcellular location is the nucleoplasm. The protein localises to the chromosome. It is found in the cytoskeleton. The protein resides in the microtubule organizing center. It localises to the centrosome. The enzyme catalyses L-seryl-[protein] + ATP = O-phospho-L-seryl-[protein] + ADP + H(+). It catalyses the reaction L-threonyl-[protein] + ATP = O-phospho-L-threonyl-[protein] + ADP + H(+). Phosphorylation of Thr-84 by OXSR1 inhibits activation. Activated by binding small G proteins. Binding of GTP-bound CDC42 or RAC1 to the autoregulatory region releases monomers from the autoinhibited dimer, and enables activation by phosphorylation of Thr-423. In terms of biological role, protein kinase involved in intracellular signaling pathways downstream of integrins and receptor-type kinases that plays an important role in cytoskeleton dynamics, in cell adhesion, migration, proliferation, apoptosis, mitosis, and in vesicle-mediated transport processes. Can directly phosphorylate BAD and protects cells against apoptosis. Activated by interaction with CDC42 and RAC1. Functions as a GTPase effector that links the Rho-related GTPases CDC42 and RAC1 to the JNK MAP kinase pathway. Phosphorylates and activates MAP2K1, and thereby mediates activation of downstream MAP kinases. Involved in the reorganization of the actin cytoskeleton, actin stress fibers and of focal adhesion complexes. Phosphorylates the tubulin chaperone TBCB and thereby plays a role in the regulation of microtubule biogenesis and organization of the tubulin cytoskeleton. Plays a role in the regulation of insulin secretion in response to elevated glucose levels. Part of a ternary complex that contains PAK1, DVL1 and MUSK that is important for MUSK-dependent regulation of AChR clustering during the formation of the neuromuscular junction (NMJ). Activity is inhibited in cells undergoing apoptosis, potentially due to binding of CDC2L1 and CDC2L2. Phosphorylates MYL9/MLC2. Phosphorylates RAF1 at 'Ser-338' and 'Ser-339' resulting in: activation of RAF1, stimulation of RAF1 translocation to mitochondria, phosphorylation of BAD by RAF1, and RAF1 binding to BCL2. Phosphorylates SNAI1 at 'Ser-246' promoting its transcriptional repressor activity by increasing its accumulation in the nucleus. In podocytes, promotes NR3C2 nuclear localization. Required for atypical chemokine receptor ACKR2-induced phosphorylation of LIMK1 and cofilin (CFL1) and for the up-regulation of ACKR2 from endosomal compartment to cell membrane, increasing its efficiency in chemokine uptake and degradation. In synapses, seems to mediate the regulation of F-actin cluster formation performed by SHANK3, maybe through CFL1 phosphorylation and inactivation. Plays a role in RUFY3-mediated facilitating gastric cancer cells migration and invasion. In response to DNA damage, phosphorylates MORC2 which activates its ATPase activity and facilitates chromatin remodeling. In neurons, plays a crucial role in regulating GABA(A) receptor synaptic stability and hence GABAergic inhibitory synaptic transmission through its role in F-actin stabilization. In hippocampal neurons, necessary for the formation of dendritic spines and excitatory synapses; this function is dependent on kinase activity and may be exerted by the regulation of actomyosin contractility through the phosphorylation of myosin II regulatory light chain (MLC). Along with GIT1, positively regulates microtubule nucleation during interphase. Phosphorylates FXR1, promoting its localization to stress granules and activity. Phosphorylates ILK on 'Thr-173' and 'Ser-246', promoting nuclear export of ILK. This chain is Serine/threonine-protein kinase PAK 1, found in Mus musculus (Mouse).